The chain runs to 164 residues: Crossover junction endodeoxyribonuclease RuvC (164 aa).

Catalysis depends on residues D7, E67, and D140. 3 residues coordinate Mg(2+): D7, E67, and D140.

Belongs to the RuvC family. Homodimer which binds Holliday junction (HJ) DNA. The HJ becomes 2-fold symmetrical on binding to RuvC with unstacked arms; it has a different conformation from HJ DNA in complex with RuvA. In the full resolvosome a probable DNA-RuvA(4)-RuvB(12)-RuvC(2) complex forms which resolves the HJ. It depends on Mg(2+) as a cofactor.

Its subcellular location is the cytoplasm. It catalyses the reaction Endonucleolytic cleavage at a junction such as a reciprocal single-stranded crossover between two homologous DNA duplexes (Holliday junction).. The RuvA-RuvB-RuvC complex processes Holliday junction (HJ) DNA during genetic recombination and DNA repair. Endonuclease that resolves HJ intermediates. Cleaves cruciform DNA by making single-stranded nicks across the HJ at symmetrical positions within the homologous arms, yielding a 5'-phosphate and a 3'-hydroxyl group; requires a central core of homology in the junction. The consensus cleavage sequence is 5'-(A/T)TT(C/G)-3'. Cleavage occurs on the 3'-side of the TT dinucleotide at the point of strand exchange. HJ branch migration catalyzed by RuvA-RuvB allows RuvC to scan DNA until it finds its consensus sequence, where it cleaves and resolves the cruciform DNA. The chain is Crossover junction endodeoxyribonuclease RuvC from Chloroflexus aggregans (strain MD-66 / DSM 9485).